The following is a 292-amino-acid chain: MTSVYESLLSDYPDKGVIGKPEIRDTETEIIEKLRTLYNHFVQAKQTGKPIFVLIGAGVSTGSKLPDFRGKQGVWTLQAEGKHAEGVDFQVARPGVSHKSILALHKAGYIKTIITQNVDGLDRKVGIPVEDLIEVHGNLFLEVCQSCFSEYVREEIVMSVGLCPTGRNCEGNKRTGRSCRGKLRDATLDWDTEISLNHLDRIRKAWKQTSHLLCIGTSLEIIPMGSLPLDAKSKGIKTTTINYQETAHEKIVETAIHADVKLILYSLCNALGVNVDLGDDLPDEVPIPLKIS.

The Deacetylase sirtuin-type domain occupies 31–292; that stretch reads IEKLRTLYNH…DEVPIPLKIS (262 aa). Residues 56-75 and 116-119 each bind NAD(+); these read GAGV…QGVW and QNVD. His-136 (proton acceptor) is an active-site residue. Residues Cys-144, Cys-147, Cys-163, and Cys-169 each contribute to the Zn(2+) site. NAD(+) is bound by residues 216-218, 242-244, and Val-260; these read GTS and NYQ.

This sequence belongs to the sirtuin family. Class IV subfamily. Requires Zn(2+) as cofactor.

The enzyme catalyses N(6)-acetyl-L-lysyl-[protein] + NAD(+) + H2O = 2''-O-acetyl-ADP-D-ribose + nicotinamide + L-lysyl-[protein]. In terms of biological role, NAD-dependent protein deacetylase. This is NAD-dependent protein deacetylase sir-2.4 (sir-2.4) from Caenorhabditis elegans.